Reading from the N-terminus, the 205-residue chain is Adenylyl-sulfate kinase (205 aa).

Position 31–38 (31–38) interacts with ATP; it reads GLSGAGKS. The Phosphoserine intermediate role is filled by Ser-105.

The protein belongs to the APS kinase family.

The catalysed reaction is adenosine 5'-phosphosulfate + ATP = 3'-phosphoadenylyl sulfate + ADP + H(+). It participates in sulfur metabolism; hydrogen sulfide biosynthesis; sulfite from sulfate: step 2/3. Functionally, catalyzes the synthesis of activated sulfate. The sequence is that of Adenylyl-sulfate kinase from Shewanella sp. (strain MR-7).